We begin with the raw amino-acid sequence, 130 residues long: Large ribosomal subunit protein bL12 (130 aa).

It belongs to the bacterial ribosomal protein bL12 family. Homodimer. Part of the ribosomal stalk of the 50S ribosomal subunit. Forms a multimeric L10(L12)X complex, where L10 forms an elongated spine to which 2 to 4 L12 dimers bind in a sequential fashion. Binds GTP-bound translation factors.

In terms of biological role, forms part of the ribosomal stalk which helps the ribosome interact with GTP-bound translation factors. Is thus essential for accurate translation. In Chlamydia trachomatis serovar L2 (strain ATCC VR-902B / DSM 19102 / 434/Bu), this protein is Large ribosomal subunit protein bL12.